Reading from the N-terminus, the 87-residue chain is RNA-binding protein Hfq (87 aa).

Residues 9–68 (DPFLNALRRERIPVSIYLVNGIKLQGQIESFDQFVILLKNTVNQMVYKHAISTVVPARPV) form the Sm domain. The tract at residues 65-87 (ARPVSHHSGDRPQGDRPQEKSED) is disordered. Basic and acidic residues predominate over residues 71-87 (HSGDRPQGDRPQEKSED).

The protein belongs to the Hfq family. As to quaternary structure, homohexamer.

In terms of biological role, RNA chaperone that binds small regulatory RNA (sRNAs) and mRNAs to facilitate mRNA translational regulation in response to envelope stress, environmental stress and changes in metabolite concentrations. Also binds with high specificity to tRNAs. This is RNA-binding protein Hfq from Vibrio parahaemolyticus serotype O3:K6 (strain RIMD 2210633).